A 381-amino-acid polypeptide reads, in one-letter code: Alcohol dehydrogenase class-3 (381 aa).

Cysteine 49 lines the Zn(2+) pocket. Histidine 50 provides a ligand contact to NAD(+). Residues threonine 51 and histidine 71 each contribute to the an alcohol site. 7 residues coordinate Zn(2+): histidine 71, glutamate 72, cysteine 101, cysteine 104, cysteine 107, cysteine 115, and cysteine 179. Residues glycine 204–glycine 209, aspartate 228, lysine 233, isoleucine 274, valine 297–valine 299, threonine 322–phenylalanine 324, and arginine 374 each bind NAD(+).

This sequence belongs to the zinc-containing alcohol dehydrogenase family. Class-III subfamily. As to quaternary structure, homodimer. The cofactor is Zn(2+).

It is found in the cytoplasm. It carries out the reaction a primary alcohol + NAD(+) = an aldehyde + NADH + H(+). The catalysed reaction is a secondary alcohol + NAD(+) = a ketone + NADH + H(+). The enzyme catalyses S-(hydroxymethyl)glutathione + NADP(+) = S-formylglutathione + NADPH + H(+). It catalyses the reaction S-(hydroxymethyl)glutathione + NAD(+) = S-formylglutathione + NADH + H(+). This Oryza sativa subsp. japonica (Rice) protein is Alcohol dehydrogenase class-3.